A 165-amino-acid polypeptide reads, in one-letter code: Methylated-DNA--protein-cysteine methyltransferase, constitutive (165 aa).

Cysteine 130 (nucleophile; methyl group acceptor) is an active-site residue.

It belongs to the MGMT family.

It localises to the cytoplasm. The catalysed reaction is a 6-O-methyl-2'-deoxyguanosine in DNA + L-cysteinyl-[protein] = S-methyl-L-cysteinyl-[protein] + a 2'-deoxyguanosine in DNA. It carries out the reaction a 4-O-methyl-thymidine in DNA + L-cysteinyl-[protein] = a thymidine in DNA + S-methyl-L-cysteinyl-[protein]. In terms of biological role, involved in the cellular defense against the biological effects of O6-methylguanine (O6-MeG) and O4-methylthymine (O4-MeT) in DNA. Repairs the methylated nucleobase in DNA by stoichiometrically transferring the methyl group to a cysteine residue in the enzyme. This is a suicide reaction: the enzyme is irreversibly inactivated. This Bacillus subtilis (strain 168) protein is Methylated-DNA--protein-cysteine methyltransferase, constitutive.